The sequence spans 79 residues: Translation initiation factor IF-1, chloroplastic (79 aa).

The S1-like domain occupies 1-74 (MTRKNIDLIE…HRGRITFRLR (74 aa)).

This sequence belongs to the IF-1 family. Component of the 30S ribosomal translation pre-initiation complex which assembles on the 30S ribosome in the order IF-2 and IF-3, IF-1 and N-formylmethionyl-tRNA(fMet); mRNA recruitment can occur at any time during PIC assembly.

It is found in the plastid. Its subcellular location is the chloroplast. Functionally, one of the essential components for the initiation of protein synthesis. Stabilizes the binding of IF-2 and IF-3 on the 30S subunit to which N-formylmethionyl-tRNA(fMet) subsequently binds. Helps modulate mRNA selection, yielding the 30S pre-initiation complex (PIC). Upon addition of the 50S ribosomal subunit IF-1, IF-2 and IF-3 are released leaving the mature 70S translation initiation complex. This is Translation initiation factor IF-1, chloroplastic from Chlorella vulgaris (Green alga).